Reading from the N-terminus, the 183-residue chain is MAMNTETLSLIKQSIKTIPNYPKEGILFRDVTSLLENAAAYKATIDLLVEQYRNKGFTKIVGTEARGFLFGAPLALELGIGFVPVRKPGKLPRATISQSYELEYGHDSLEIHTDAITANDKVLVVDDLLATGGTIEATVKLIRQLGGEVQDAAFVISLPDLGGEARLTALGLELVKLCEFEGE.

This sequence belongs to the purine/pyrimidine phosphoribosyltransferase family. As to quaternary structure, homodimer.

The protein localises to the cytoplasm. The catalysed reaction is AMP + diphosphate = 5-phospho-alpha-D-ribose 1-diphosphate + adenine. The protein operates within purine metabolism; AMP biosynthesis via salvage pathway; AMP from adenine: step 1/1. Catalyzes a salvage reaction resulting in the formation of AMP, that is energically less costly than de novo synthesis. The protein is Adenine phosphoribosyltransferase of Shewanella sp. (strain ANA-3).